Here is a 188-residue protein sequence, read N- to C-terminus: dCTP deaminase (188 aa).

DCTP is bound by residues 111-116 (KSTYAR), 135-137 (TLE), Q156, Y170, K179, and Q180. The active-site Proton donor/acceptor is the E137.

This sequence belongs to the dCTP deaminase family. In terms of assembly, homotrimer.

The enzyme catalyses dCTP + H2O + H(+) = dUTP + NH4(+). It functions in the pathway pyrimidine metabolism; dUMP biosynthesis; dUMP from dCTP (dUTP route): step 1/2. Its function is as follows. Catalyzes the deamination of dCTP to dUTP. The protein is dCTP deaminase of Orientia tsutsugamushi (strain Ikeda) (Rickettsia tsutsugamushi).